A 264-amino-acid polypeptide reads, in one-letter code: Myozenin-2 (264 aa).

Omega-N-methylarginine is present on R53. The interval G90–P135 is disordered. S101 bears the Phosphoserine mark. Positions S106 to P120 are enriched in pro residues. Phosphothreonine occurs at positions 107 and 111. At S116 the chain carries Phosphoserine.

Belongs to the myozenin family. Interacts via its C-terminus with spectrin repeats 3 and 4 of ACTN2. Interacts with ACTN1, LDB3, MYOT and PPP3CA. As to expression, expressed specifically in heart and skeletal muscle. In skeletal muscle, localized to the soleus and plantaris muscles, which are predominantly composed of slow-twitch fibers.

It is found in the cytoplasm. It localises to the myofibril. The protein resides in the sarcomere. Its subcellular location is the z line. Functionally, myozenins may serve as intracellular binding proteins involved in linking Z line proteins such as alpha-actinin, gamma-filamin, TCAP/telethonin, LDB3/ZASP and localizing calcineurin signaling to the sarcomere. Plays an important role in the modulation of calcineurin signaling. May play a role in myofibrillogenesis. The sequence is that of Myozenin-2 from Mus musculus (Mouse).